Here is a 454-residue protein sequence, read N- to C-terminus: Glutamyl-tRNA reductase (454 aa).

Substrate-binding positions include 49 to 52 (TCNR), Ser109, 114 to 116 (ETQ), and Gln120. Cys50 (nucleophile) is an active-site residue. NADP(+) is bound at residue 189–194 (GAGKMG).

It belongs to the glutamyl-tRNA reductase family. Homodimer.

It catalyses the reaction (S)-4-amino-5-oxopentanoate + tRNA(Glu) + NADP(+) = L-glutamyl-tRNA(Glu) + NADPH + H(+). The protein operates within porphyrin-containing compound metabolism; protoporphyrin-IX biosynthesis; 5-aminolevulinate from L-glutamyl-tRNA(Glu): step 1/2. In terms of biological role, catalyzes the NADPH-dependent reduction of glutamyl-tRNA(Glu) to glutamate 1-semialdehyde (GSA). The polypeptide is Glutamyl-tRNA reductase (Geobacillus kaustophilus (strain HTA426)).